A 411-amino-acid polypeptide reads, in one-letter code: Carbohydrate sulfotransferase 5 (411 aa).

Residues 1–30 (MGMRARVPKVAHSTRRPPAARMWLPRFSSK) lie on the Cytoplasmic side of the membrane. The helical; Signal-anchor for type II membrane protein transmembrane segment at 31–48 (TVTVLLLAQTTCLLLFII) threads the bilayer. Residues 49-411 (SRPGPSSPAG…PDHFSWASPD (363 aa)) lie on the Lumenal side of the membrane. 71-77 (WRSGSSF) contacts 3'-phosphoadenylyl sulfate. Asn138 is a glycosylation site (N-linked (GlcNAc...) asparagine). Residue 224-232 (RDPRAVLRS) coordinates 3'-phosphoadenylyl sulfate. N-linked (GlcNAc...) asparagine glycosylation is found at Asn327 and Asn350.

It belongs to the sulfotransferase 1 family. Gal/GlcNAc/GalNAc subfamily. Predominantly expressed in small and large intestines and colon. Weakly expressed in lymphocytes. Not expressed in other tissues. Down-regulated in colonic adenocarcinomas.

Its subcellular location is the golgi apparatus membrane. Sulfotransferase that utilizes 3'-phospho-5'-adenylyl sulfate (PAPS) as sulfonate donor to catalyze the transfer of sulfate to position 6 of non-reducing N-acetylglucosamine (GlcNAc) residues and O-linked sugars of mucin-type acceptors. Acts on the non-reducing terminal GlcNAc of short carbohydrate substrates. However, it does not transfer sulfate to longer carbohydrate substrates that have poly-N-acetyllactosamine structures. Has no activity toward keratan. Not involved in generating HEV-expressed ligands for SELL. Its substrate specificity may be influenced by its subcellular location. In Homo sapiens (Human), this protein is Carbohydrate sulfotransferase 5 (CHST5).